Here is a 396-residue protein sequence, read N- to C-terminus: Succinyl-diaminopimelate desuccinylase (396 aa).

Residue His-74 coordinates Zn(2+). Asp-76 is an active-site residue. Asp-107 is a binding site for Zn(2+). Glu-142 functions as the Proton acceptor in the catalytic mechanism. Positions 143, 171, and 360 each coordinate Zn(2+).

It belongs to the peptidase M20A family. DapE subfamily. Homodimer. Requires Zn(2+) as cofactor. Co(2+) serves as cofactor.

It carries out the reaction N-succinyl-(2S,6S)-2,6-diaminopimelate + H2O = (2S,6S)-2,6-diaminopimelate + succinate. The protein operates within amino-acid biosynthesis; L-lysine biosynthesis via DAP pathway; LL-2,6-diaminopimelate from (S)-tetrahydrodipicolinate (succinylase route): step 3/3. In terms of biological role, catalyzes the hydrolysis of N-succinyl-L,L-diaminopimelic acid (SDAP), forming succinate and LL-2,6-diaminopimelate (DAP), an intermediate involved in the bacterial biosynthesis of lysine and meso-diaminopimelic acid, an essential component of bacterial cell walls. The polypeptide is Succinyl-diaminopimelate desuccinylase (Methylobacterium nodulans (strain LMG 21967 / CNCM I-2342 / ORS 2060)).